We begin with the raw amino-acid sequence, 347 residues long: Holliday junction branch migration complex subunit RuvB (347 aa).

A compositionally biased stretch (polar residues) spans 1 to 10 (MAIVSSSSGR). The tract at residues 1–29 (MAIVSSSSGRKSPCRETALVDPQPAPEEQ) is disordered. A large ATPase domain (RuvB-L) region spans residues 13 to 198 (PCRETALVDP…FGLIQRLEFY (186 aa)). Residues Leu37, Arg38, Gly79, Lys82, Thr83, Thr84, Arg188, Tyr198, and Arg235 each contribute to the ATP site. Thr83 serves as a coordination point for Mg(2+). The segment at 199–270 (GQTDLEAIVA…MVAEALSLHR (72 aa)) is small ATPAse domain (RuvB-S). Residues 273 to 347 (HRGLDASDRR…AARSHIAEAA (75 aa)) form a head domain (RuvB-H) region. Arg328 and Arg333 together coordinate DNA.

Belongs to the RuvB family. As to quaternary structure, homohexamer. Forms an RuvA(8)-RuvB(12)-Holliday junction (HJ) complex. HJ DNA is sandwiched between 2 RuvA tetramers; dsDNA enters through RuvA and exits via RuvB. An RuvB hexamer assembles on each DNA strand where it exits the tetramer. Each RuvB hexamer is contacted by two RuvA subunits (via domain III) on 2 adjacent RuvB subunits; this complex drives branch migration. In the full resolvosome a probable DNA-RuvA(4)-RuvB(12)-RuvC(2) complex forms which resolves the HJ.

It localises to the cytoplasm. It catalyses the reaction ATP + H2O = ADP + phosphate + H(+). Its function is as follows. The RuvA-RuvB-RuvC complex processes Holliday junction (HJ) DNA during genetic recombination and DNA repair, while the RuvA-RuvB complex plays an important role in the rescue of blocked DNA replication forks via replication fork reversal (RFR). RuvA specifically binds to HJ cruciform DNA, conferring on it an open structure. The RuvB hexamer acts as an ATP-dependent pump, pulling dsDNA into and through the RuvAB complex. RuvB forms 2 homohexamers on either side of HJ DNA bound by 1 or 2 RuvA tetramers; 4 subunits per hexamer contact DNA at a time. Coordinated motions by a converter formed by DNA-disengaged RuvB subunits stimulates ATP hydrolysis and nucleotide exchange. Immobilization of the converter enables RuvB to convert the ATP-contained energy into a lever motion, pulling 2 nucleotides of DNA out of the RuvA tetramer per ATP hydrolyzed, thus driving DNA branch migration. The RuvB motors rotate together with the DNA substrate, which together with the progressing nucleotide cycle form the mechanistic basis for DNA recombination by continuous HJ branch migration. Branch migration allows RuvC to scan DNA until it finds its consensus sequence, where it cleaves and resolves cruciform DNA. The polypeptide is Holliday junction branch migration complex subunit RuvB (Synechococcus sp. (strain CC9902)).